The sequence spans 413 residues: Glucose-1-phosphate adenylyltransferase (413 aa).

Residues Y102, G167, 182–183 (EK), and S200 each bind alpha-D-glucose 1-phosphate.

It belongs to the bacterial/plant glucose-1-phosphate adenylyltransferase family. Homotetramer.

The catalysed reaction is alpha-D-glucose 1-phosphate + ATP + H(+) = ADP-alpha-D-glucose + diphosphate. The protein operates within glycan biosynthesis; glycogen biosynthesis. Involved in the biosynthesis of ADP-glucose, a building block required for the elongation reactions to produce glycogen. Catalyzes the reaction between ATP and alpha-D-glucose 1-phosphate (G1P) to produce pyrophosphate and ADP-Glc. The protein is Glucose-1-phosphate adenylyltransferase of Deinococcus geothermalis (strain DSM 11300 / CIP 105573 / AG-3a).